Reading from the N-terminus, the 185-residue chain is HTH-type transcriptional regulator Hpr (185 aa).

The 145-residue stretch at 13-157 (AMIFSQRIAQ…LIAILRNIYG (145 aa)) folds into the HTH marR-type domain. A DNA-binding region (H-T-H motif) is located at residues 63–86 (ISEIAKFGVMHVSTAFNFSKKLEE).

Homodimer.

In terms of biological role, negative regulator of protease production and sporulation. This Bacillus cereus (strain G9842) protein is HTH-type transcriptional regulator Hpr.